The primary structure comprises 230 residues: 3-isopropylmalate dehydratase small subunit (230 aa).

Belongs to the LeuD family. LeuD type 1 subfamily. Heterodimer of LeuC and LeuD.

It catalyses the reaction (2R,3S)-3-isopropylmalate = (2S)-2-isopropylmalate. It participates in amino-acid biosynthesis; L-leucine biosynthesis; L-leucine from 3-methyl-2-oxobutanoate: step 2/4. Catalyzes the isomerization between 2-isopropylmalate and 3-isopropylmalate, via the formation of 2-isopropylmaleate. This chain is 3-isopropylmalate dehydratase small subunit, found in Bifidobacterium longum (strain DJO10A).